Consider the following 414-residue polypeptide: Dual-specificity RNA methyltransferase RlmN (414 aa).

Positions 1-20 are enriched in low complexity; sequence MMSTPETATEATAPEAAPAP. The disordered stretch occupies residues 1–24; that stretch reads MMSTPETATEATAPEAAPAPSLGA. Glu129 (proton acceptor) is an active-site residue. One can recognise a Radical SAM core domain in the interval 135–385; it reads ESDRGTLCVS…VRTPRGRDIL (251 aa). A disulfide bridge links Cys142 with Cys388. Cys149, Cys153, and Cys156 together coordinate [4Fe-4S] cluster. S-adenosyl-L-methionine-binding positions include 214–215, Ser246, 268–270, and Asn345; these read GE and SLH. Cys388 serves as the catalytic S-methylcysteine intermediate.

It belongs to the radical SAM superfamily. RlmN family. [4Fe-4S] cluster is required as a cofactor.

The protein resides in the cytoplasm. The enzyme catalyses adenosine(2503) in 23S rRNA + 2 reduced [2Fe-2S]-[ferredoxin] + 2 S-adenosyl-L-methionine = 2-methyladenosine(2503) in 23S rRNA + 5'-deoxyadenosine + L-methionine + 2 oxidized [2Fe-2S]-[ferredoxin] + S-adenosyl-L-homocysteine. It carries out the reaction adenosine(37) in tRNA + 2 reduced [2Fe-2S]-[ferredoxin] + 2 S-adenosyl-L-methionine = 2-methyladenosine(37) in tRNA + 5'-deoxyadenosine + L-methionine + 2 oxidized [2Fe-2S]-[ferredoxin] + S-adenosyl-L-homocysteine. Its function is as follows. Specifically methylates position 2 of adenine 2503 in 23S rRNA and position 2 of adenine 37 in tRNAs. m2A2503 modification seems to play a crucial role in the proofreading step occurring at the peptidyl transferase center and thus would serve to optimize ribosomal fidelity. The sequence is that of Dual-specificity RNA methyltransferase RlmN from Xanthobacter autotrophicus (strain ATCC BAA-1158 / Py2).